We begin with the raw amino-acid sequence, 114 residues long: MNSYLLLLMVSLLTCIGQLCQKQAAQCWEQPQARRLNLTLRWLAIAVVSLGLGMLLWLRLLQQLPLSVAYPMLSFNFVLVTLAAQLFYGEKATLRHWLGVAAIIFGILLMSWHL.

The next 3 helical transmembrane spans lie at 38–58, 64–84, and 94–114; these read LTLR…LLWL, LPLS…TLAA, and LRHW…SWHL. Residues 43-112 enclose the EamA domain; sequence LAIAVVSLGL…IIFGILLMSW (70 aa).

The protein belongs to the ArnE family. Heterodimer of ArnE and ArnF.

The protein resides in the cell inner membrane. Its pathway is bacterial outer membrane biogenesis; lipopolysaccharide biosynthesis. Functionally, translocates 4-amino-4-deoxy-L-arabinose-phosphoundecaprenol (alpha-L-Ara4N-phosphoundecaprenol) from the cytoplasmic to the periplasmic side of the inner membrane. The chain is Probable 4-amino-4-deoxy-L-arabinose-phosphoundecaprenol flippase subunit ArnE from Yersinia pseudotuberculosis serotype O:1b (strain IP 31758).